Reading from the N-terminus, the 750-residue chain is Tyrosine-protein phosphatase 2 (750 aa).

Positions 1 to 20 (MDRIAQQYRNGKRDNNGNRM) are disordered. Position 258 is a phosphoserine (serine 258). 2 disordered regions span residues 327-348 (LHQK…SKLY) and 425-450 (VKLP…DKSY). The span at 330–348 (KQLSQKQRGPQSTDDSKLY) shows a compositional bias: polar residues. The Tyrosine-protein phosphatase domain maps to 383 to 737 (SPSPLSSDDT…IACYEALLNY (355 aa)). Residue serine 430 is modified to Phosphoserine. Cysteine 666 serves as the catalytic Phosphocysteine intermediate.

This sequence belongs to the protein-tyrosine phosphatase family. Non-receptor class subfamily. As to quaternary structure, interacts with HOG1.

The protein localises to the cytoplasm. It localises to the nucleus. It catalyses the reaction O-phospho-L-tyrosyl-[protein] + H2O = L-tyrosyl-[protein] + phosphate. In terms of biological role, major phosphatase responsible with PTP3 for tyrosine dephosphorylation of MAP kinase HOG1 to inactivate its activity. May also be involved in the regulation of MAP kinase FUS3. May be implicated in the ubiquitin-mediated protein degradation. The polypeptide is Tyrosine-protein phosphatase 2 (PTP2) (Saccharomyces cerevisiae (strain ATCC 204508 / S288c) (Baker's yeast)).